We begin with the raw amino-acid sequence, 235 residues long: 2-C-methyl-D-erythritol 4-phosphate cytidylyltransferase (235 aa).

It belongs to the IspD/TarI cytidylyltransferase family. IspD subfamily.

It carries out the reaction 2-C-methyl-D-erythritol 4-phosphate + CTP + H(+) = 4-CDP-2-C-methyl-D-erythritol + diphosphate. The protein operates within isoprenoid biosynthesis; isopentenyl diphosphate biosynthesis via DXP pathway; isopentenyl diphosphate from 1-deoxy-D-xylulose 5-phosphate: step 2/6. In terms of biological role, catalyzes the formation of 4-diphosphocytidyl-2-C-methyl-D-erythritol from CTP and 2-C-methyl-D-erythritol 4-phosphate (MEP). This chain is 2-C-methyl-D-erythritol 4-phosphate cytidylyltransferase, found in Leptospira borgpetersenii serovar Hardjo-bovis (strain L550).